A 427-amino-acid chain; its full sequence is NADH-quinone oxidoreductase subunit 14 (427 aa).

14 helical membrane-spanning segments follow: residues 1 to 21 (MTLA…FVLP), 30 to 50 (LLGL…PFAF), 57 to 77 (GVSQ…VGLV), 79 to 99 (SGRF…HLLA), 104 to 124 (LLLM…LATW), 137 to 157 (FLLG…FYGA), 172 to 192 (YALA…LAPF), 204 to 224 (PTPV…AALL), 230 to 250 (PEAL…AALA), 257 to 277 (LLAY…YTGN), 280 to 300 (ALGF…AVLS), 322 to 342 (LGLA…LAGF), 360 to 380 (VLVL…GLGL), and 400 to 420 (AAVV…GLVL).

The protein belongs to the complex I subunit 2 family. In terms of assembly, NDH-1 is composed of 15 different subunits, Nqo1 to Nqo15. The complex has a L-shaped structure, with the hydrophobic arm (subunits Nqo7, Nqo8 and Nqo10 to Nqo14) embedded in the membrane and the hydrophilic peripheral arm (subunits Nqo1 to Nqo6, Nqo9 and Nqo15) protruding into the bacterial cytoplasm. The hydrophilic domain contains all the redox centers.

Its subcellular location is the cell inner membrane. The catalysed reaction is a quinone + NADH + 5 H(+)(in) = a quinol + NAD(+) + 4 H(+)(out). In terms of biological role, NDH-1 shuttles electrons from NADH, via FMN and iron-sulfur (Fe-S) centers, to quinones in the respiratory chain. The immediate electron acceptor for the enzyme in this species is menaquinone. Couples the redox reaction to proton translocation (for every two electrons transferred, four hydrogen ions are translocated across the cytoplasmic membrane), and thus conserves the redox energy in a proton gradient required for the synthesis of ATP. This Thermus thermophilus (strain ATCC 27634 / DSM 579 / HB8) protein is NADH-quinone oxidoreductase subunit 14 (nqo14).